Consider the following 442-residue polypeptide: Glutamate--methylamine ligase (442 aa).

A GS beta-grasp domain is found at 13-97; the sequence is NQVKYILAQF…IACDGHTHGK (85 aa). The GS catalytic domain maps to 103 to 442; sequence TRVVLKKQLE…WEVNSYLEFF (340 aa).

It belongs to the glutamine synthetase family. Type 3 subfamily. Mg(2+) serves as cofactor.

It catalyses the reaction methylamine + L-glutamate + ATP = N(5)-methyl-L-glutamine + ADP + phosphate + H(+). Catalyzes the formation of N(5)-methyl-L-glutamine from glutamate and methylamine. The sequence is that of Glutamate--methylamine ligase from Methyloversatilis universalis (strain ATCC BAA-1314 / DSM 25237 / JCM 13912 / CCUG 52030 / FAM5).